The sequence spans 181 residues: Protein AC41 (181 aa).

Plays a role in late gene expression. This chain is Protein AC41 (AC41), found in Autographa californica nuclear polyhedrosis virus (AcMNPV).